The sequence spans 247 residues: ATP synthase subunit a, chloroplastic (247 aa).

5 helical membrane-spanning segments follow: residues 38–58 (QVLI…ILVV), 95–115 (VPFI…GALL), 134–154 (INTT…AGIS), 199–219 (LVVV…VMFL), and 220–240 (GLFT…AYIG).

It belongs to the ATPase A chain family. F-type ATPases have 2 components, CF(1) - the catalytic core - and CF(0) - the membrane proton channel. CF(1) has five subunits: alpha(3), beta(3), gamma(1), delta(1), epsilon(1). CF(0) has four main subunits: a, b, b' and c.

It localises to the plastid. The protein localises to the chloroplast thylakoid membrane. Its function is as follows. Key component of the proton channel; it plays a direct role in the translocation of protons across the membrane. The chain is ATP synthase subunit a, chloroplastic from Cicer arietinum (Chickpea).